Here is a 226-residue protein sequence, read N- to C-terminus: MALSDADVQKQIKHMMAFIEQEANEKAEEIDAKAEEEFNIEKGRLVQTQRLKIMEYYEKKEKQIEQQKKIQMSNLMNQARLKVLRARDDLITDLLNEAKQRLSKVVKDTTRYQVLLDGLVLQGLYQLLEPRMIVRCRKQDFPLVKAAVQKAIPMYKIATKKDVDVQIDQEAYLPEEIAGGVEIYNGDRKIKVSNTLESRLDLIAQQMMPEVRGALFGANANRKFLD.

The residue at position 2 (Ala2) is an N-acetylalanine. Phosphotyrosine is present on Tyr56.

The protein belongs to the V-ATPase E subunit family. In terms of assembly, V-ATPase is a heteromultimeric enzyme made up of two complexes: the ATP-hydrolytic V1 complex and the proton translocation V0 complex. The V1 complex consists of three catalytic AB heterodimers that form a heterohexamer, three peripheral stalks each consisting of EG heterodimers, one central rotor including subunits D and F, and the regulatory subunits C and H. The proton translocation complex V0 consists of the proton transport subunit a, a ring of proteolipid subunits c9c'', rotary subunit d, subunits e and f, and the accessory subunits ATP6AP1/Ac45 and ATP6AP2/PRR. Interacts with RABL2/RABL2A; binds preferentially to GTP-bound RABL2. Interacts with ALDOC. Interacts with RAB11B. Expressed within the midpiece of sperm tail (at protein level). Kidney; localizes to early distal nephron, encompassing thick ascending limbs and distal convoluted tubules (at protein level).

It is found in the apical cell membrane. The protein resides in the cytoplasmic vesicle. It localises to the secretory vesicle. The protein localises to the synaptic vesicle membrane. Its subcellular location is the clathrin-coated vesicle membrane. Functionally, subunit of the V1 complex of vacuolar(H+)-ATPase (V-ATPase), a multisubunit enzyme composed of a peripheral complex (V1) that hydrolyzes ATP and a membrane integral complex (V0) that translocates protons. V-ATPase is responsible for acidifying and maintaining the pH of intracellular compartments and in some cell types, is targeted to the plasma membrane, where it is responsible for acidifying the extracellular environment. This is V-type proton ATPase subunit E 1 (Atp6v1e1) from Mus musculus (Mouse).